The primary structure comprises 326 residues: Zinc finger CCCH domain-containing protein 15 (326 aa).

Residues 1–14 (MADGGGGGEAGSGG) are compositionally biased toward gly residues. The disordered stretch occupies residues 1–142 (MADGGGGGEA…SSSGSGSGEV (142 aa)). Positions 24–33 (KPPKNIRKRP) are enriched in basic residues. A compositionally biased stretch (low complexity) spans 47–64 (SGAIAAARAKKAPSSTSK). Over residues 81–100 (YESSRTIQASTDSRATATLE) the composition is skewed to polar residues. Positions 104 to 125 (EFDRDARAIRERQLKQAEESLK) are enriched in basic and acidic residues. Residues 187 to 215 (DYQPDICKDYKETGYCGYGDSCKFMHDRG) form a C3H1-type zinc finger. The RING-type zinc finger occupies 265–303 (CYICREPFVDPVVTKCKHYFCEHCALKHHSKNKKCFVCN).

This chain is Zinc finger CCCH domain-containing protein 15, found in Oryza sativa subsp. japonica (Rice).